Here is a 192-residue protein sequence, read N- to C-terminus: Ion-translocating oxidoreductase complex subunit B (192 aa).

Positions 1 to 26 (MSAVWIAVIAISLLGLIFGLILGYAS) are hydrophobic. Positions 32–91 (QDDPVVEKIDELLPQSQCGQCGYPGCRPYAEAVGAQGEKINRCAPGGEAVMLKIAALLNV) constitute a 4Fe-4S domain. [4Fe-4S] cluster is bound by residues cysteine 49, cysteine 52, cysteine 57, cysteine 74, cysteine 117, cysteine 120, cysteine 123, cysteine 127, cysteine 147, cysteine 150, cysteine 153, and cysteine 157. 2 4Fe-4S ferredoxin-type domains span residues 108-137 (MLAV…GATR) and 138-167 (AMHT…LVPV).

The protein belongs to the 4Fe4S bacterial-type ferredoxin family. RnfB subfamily. In terms of assembly, the complex is composed of six subunits: RnfA, RnfB, RnfC, RnfD, RnfE and RnfG. [4Fe-4S] cluster serves as cofactor.

The protein localises to the cell inner membrane. Part of a membrane-bound complex that couples electron transfer with translocation of ions across the membrane. The chain is Ion-translocating oxidoreductase complex subunit B from Klebsiella pneumoniae (strain 342).